The chain runs to 201 residues: Ribosome maturation factor RimP (201 aa).

The protein belongs to the RimP family.

The protein resides in the cytoplasm. Required for maturation of 30S ribosomal subunits. The chain is Ribosome maturation factor RimP from Acidiphilium cryptum (strain JF-5).